Reading from the N-terminus, the 339-residue chain is UDP-N-acetylenolpyruvoylglucosamine reductase (339 aa).

In terms of domain architecture, FAD-binding PCMH-type spans 18–189; it reads GVEVKAKWFA…LRVRFALNRV (172 aa). The active site involves R166. The Proton donor role is filled by S239. E335 is a catalytic residue.

The protein belongs to the MurB family. FAD is required as a cofactor.

Its subcellular location is the cytoplasm. It carries out the reaction UDP-N-acetyl-alpha-D-muramate + NADP(+) = UDP-N-acetyl-3-O-(1-carboxyvinyl)-alpha-D-glucosamine + NADPH + H(+). Its pathway is cell wall biogenesis; peptidoglycan biosynthesis. Functionally, cell wall formation. The chain is UDP-N-acetylenolpyruvoylglucosamine reductase from Pseudomonas fluorescens (strain ATCC BAA-477 / NRRL B-23932 / Pf-5).